The primary structure comprises 785 residues: Tripartite terminase subunit 1 (785 aa).

The segment at 197-225 (CAVCFEELCVTANQGATIARRLADRICNH) adopts a C3H1-type zinc-finger fold. Positions 433–489 (GGAADAPKGGAGPDDDGDRVAVEEGTRGLGAPGGGGEDEDRRRGPGGQGPETWGDIA) are disordered. 696 to 703 (FASVYRCG) contacts ATP.

The protein belongs to the herpesviridae TRM1 protein family. As to quaternary structure, associates with TRM2 and TRM3 to form the tripartite terminase complex. Interacts with portal protein.

The protein localises to the host nucleus. Its function is as follows. Component of the molecular motor that translocates viral genomic DNA in empty capsid during DNA packaging. Forms a tripartite terminase complex together with TRM2 and TRM3 in the host cytoplasm. Once the complex reaches the host nucleus, it interacts with the capsid portal vertex. This portal forms a ring in which genomic DNA is translocated into the capsid. TRM1 carries an endonuclease activity that plays an important role for the cleavage of concatemeric viral DNA into unit length genomes. The protein is Tripartite terminase subunit 1 of Human herpesvirus 1 (strain Angelotti) (HHV-1).